A 779-amino-acid chain; its full sequence is MDFLDFPALVVDESAALPQPASRLSLASLRLNDDEQEAKFVLPNVSKHDTEFTDLHSKMKHFASISLGEIRPASVSLSKEVAAPISNNIEKPTTTNQLLSKKINSLLNVPNYASYTSDSETKRALQILDANHSDLGLNFNQLVASDFVGTLNRKSLRSKLENSMLNSHSDILSNFQSIARRIKRLSGPLERINNAMQNFKDTTESIDFEFEHVKDRLDQLKARRQVIIKLRDSLTLTQLELDHLQNGTINDLFFQILNKINFIKEKATYLLSNEKTTSAGVALLKTMNNNLTVSNKRIYNYLINFIEEYDTLSRQYGERTIGDESLSNFQTSLIHLSNDVQFFQDFLNRIVGLRSKRLLDDFLSQFDIDNKKLQRPIILSAHDPVRYLGDVLAYVHSMIVNELEFLKSTFKLKSELVTSDSVLKDNMDFIGDLHLKLLNEIFTSLANTIRIRLEQIVRFENNPMLNLDIVQCLSLYQMMLVKNGINESSQLMTSLNDLENLARSKIVSSVTSYLKDLDKNQIAAADLLPPDWFVDYLSKLSQLLNKLEQQNETRILTDDLYDKLILDPINNNLVLNLQNWFPTAKKEKSARIDLLIVQINSFDLVKSKLGPFHSTIFSSDYGKSVFSKLETQYTLCVTKLKETMNSYLFESTGMELYFNLFNMIFPIISVQDELDYDMYLSAVENPIMKLAVIHDNIHEKLNTYLPLAVSDFQDVKLFNLMPPAVEEDIVSTCFGNFIKFYKVFKSVLNKIYPEDEEMIMSTLNFTTNEVSTLLGVEDK.

Belongs to the COG6 family.

The protein localises to the golgi apparatus membrane. Acts as a component of the peripheral membrane COG complex that is involved in intra-Golgi protein trafficking. COG is located at the cis-Golgi, and regulates tethering of retrograde intra-Golgi vesicles and possibly a number of other membrane trafficking events. The sequence is that of Conserved oligomeric Golgi complex subunit 6 (COG6) from Kluyveromyces lactis (strain ATCC 8585 / CBS 2359 / DSM 70799 / NBRC 1267 / NRRL Y-1140 / WM37) (Yeast).